The chain runs to 396 residues: Acetylornithine aminotransferase 2 (396 aa).

Pyridoxal 5'-phosphate-binding positions include 102-103 (GA) and phenylalanine 134. Arginine 137 serves as a coordination point for N(2)-acetyl-L-ornithine. A pyridoxal 5'-phosphate-binding site is contributed by 219 to 222 (DEVQ). Lysine 248 is subject to N6-(pyridoxal phosphate)lysine. Threonine 276 contacts pyridoxal 5'-phosphate.

The protein belongs to the class-III pyridoxal-phosphate-dependent aminotransferase family. ArgD subfamily. As to quaternary structure, homodimer. It depends on pyridoxal 5'-phosphate as a cofactor.

It is found in the cytoplasm. The enzyme catalyses N(2)-acetyl-L-ornithine + 2-oxoglutarate = N-acetyl-L-glutamate 5-semialdehyde + L-glutamate. The protein operates within amino-acid biosynthesis; L-arginine biosynthesis; N(2)-acetyl-L-ornithine from L-glutamate: step 4/4. The chain is Acetylornithine aminotransferase 2 from Bordetella pertussis (strain Tohama I / ATCC BAA-589 / NCTC 13251).